The following is a 59-amino-acid chain: Large ribosomal subunit protein uL30 (59 aa).

Belongs to the universal ribosomal protein uL30 family. As to quaternary structure, part of the 50S ribosomal subunit.

This Syntrophotalea carbinolica (strain DSM 2380 / NBRC 103641 / GraBd1) (Pelobacter carbinolicus) protein is Large ribosomal subunit protein uL30.